Here is a 161-residue protein sequence, read N- to C-terminus: UPF0178 protein PXO_00400 (161 aa).

It belongs to the UPF0178 family.

The protein is UPF0178 protein PXO_00400 of Xanthomonas oryzae pv. oryzae (strain PXO99A).